Consider the following 190-residue polypeptide: Glutathione peroxidase 2 (190 aa).

Sec40 is a catalytic residue. Sec40 is a non-standard amino acid (selenocysteine).

This sequence belongs to the glutathione peroxidase family. In terms of assembly, homotetramer. Mostly in liver and gastrointestinal tract, not found in heart or kidney.

The protein resides in the cytoplasm. Its subcellular location is the cytosol. It carries out the reaction 2 glutathione + H2O2 = glutathione disulfide + 2 H2O. The enzyme catalyses a hydroperoxy polyunsaturated fatty acid + 2 glutathione = a hydroxy polyunsaturated fatty acid + glutathione disulfide + H2O. The catalysed reaction is tert-butyl hydroperoxide + 2 glutathione = tert-butanol + glutathione disulfide + H2O. It catalyses the reaction cumene hydroperoxide + 2 glutathione = 2-phenylpropan-2-ol + glutathione disulfide + H2O. It carries out the reaction (13S)-hydroperoxy-(9Z,11E)-octadecadienoate + 2 glutathione = (13S)-hydroxy-(9Z,11E)-octadecadienoate + glutathione disulfide + H2O. The enzyme catalyses (5S)-hydroperoxy-(6E,8Z,11Z,14Z)-eicosatetraenoate + 2 glutathione = (5S)-hydroxy-(6E,8Z,11Z,14Z)-eicosatetraenoate + glutathione disulfide + H2O. The catalysed reaction is (12R)-hydroperoxy-(5Z,8Z,10E,14Z)-eicosatetraenoate + 2 glutathione = (12R)-hydroxy-(5Z,8Z,10E,14Z)-eicosatetraenoate + glutathione disulfide + H2O. It catalyses the reaction (15S)-hydroperoxy-(5Z,8Z,11Z,13E)-eicosatetraenoate + 2 glutathione = (15S)-hydroxy-(5Z,8Z,11Z,13E)-eicosatetraenoate + glutathione disulfide + H2O. Its function is as follows. Catalyzes the reduction of hydroperoxides in a glutathione-dependent manner thus regulating cellular redox homeostasis. Can reduce small soluble hydroperoxides such as H2O2, cumene hydroperoxide and tert-butyl hydroperoxide, as well as several fatty acid-derived hydroperoxides. Cannot reduce phosphatidycholine hydroperoxide. The chain is Glutathione peroxidase 2 from Homo sapiens (Human).